The chain runs to 264 residues: Phosphonoacetaldehyde hydrolase (264 aa).

Aspartate 9 functions as the Nucleophile in the catalytic mechanism. 2 residues coordinate Mg(2+): aspartate 9 and alanine 11. The active-site Schiff-base intermediate with substrate is the lysine 50. A Mg(2+)-binding site is contributed by aspartate 183.

Belongs to the HAD-like hydrolase superfamily. PhnX family. In terms of assembly, homodimer. Requires Mg(2+) as cofactor.

It carries out the reaction phosphonoacetaldehyde + H2O = acetaldehyde + phosphate + H(+). Functionally, involved in phosphonate degradation. In Bacillus mycoides (strain KBAB4) (Bacillus weihenstephanensis), this protein is Phosphonoacetaldehyde hydrolase.